The chain runs to 197 residues: Protein-S-isoprenylcysteine O-methyltransferase A (197 aa).

3 helical membrane-spanning segments follow: residues 16–36, 52–72, and 81–101; these read MLLSLIFFHISEYILAITIHG, ALAMLLSLLEYLTEIILFPGL, and FGLIMIIVGEIIRKAAIITAG. S-adenosyl-L-methionine is bound by residues 116–119, Tyr-124, and 129–132; these read HGLV and HPSY. Residues 140–160 form a helical membrane-spanning segment; that stretch reads VGTQVMLCNPVSAVAFAVVVW. Arg-166 is a binding site for substrate. S-adenosyl-L-methionine is bound at residue Glu-170.

The protein belongs to the class VI-like SAM-binding methyltransferase superfamily. Isoprenylcysteine carboxyl methyltransferase family. It depends on Zn(2+) as a cofactor. In terms of tissue distribution, expressed primarily in flowers, stems, leaves and roots. Almost not expressed in siliques. Detected in root tips and vascular tissues of roots, cotyledons, petiols, hypocotyls, filaments, pollen grains and the distal and proximal portions of the gynoecium.

Its subcellular location is the endoplasmic reticulum membrane. It catalyses the reaction [protein]-C-terminal S-[(2E,6E)-farnesyl]-L-cysteine + S-adenosyl-L-methionine = [protein]-C-terminal S-[(2E,6E)-farnesyl]-L-cysteine methyl ester + S-adenosyl-L-homocysteine. Its activity is regulated as follows. Inhibited by farnesylthioacetic acid (FTAA) and N-acetyl-S-trans, trans-farnesyl-l-cysteine (AFC). Catalyzes the post-translational methylation of isoprenylated C-terminal cysteine residues, resulting in the modulation of the function of prenylated proteins. Involved in negative regulation of abscisic acid signaling. Carboxyl methylation is a reversible and potentially regulated step in the post-translational modification of prenylated proteins. This chain is Protein-S-isoprenylcysteine O-methyltransferase A, found in Arabidopsis thaliana (Mouse-ear cress).